We begin with the raw amino-acid sequence, 267 residues long: 2-keto-3-deoxy-L-rhamnonate aldolase (267 aa).

The Proton acceptor role is filled by H49. Q151 is a binding site for substrate. A Mg(2+)-binding site is contributed by E153. Substrate contacts are provided by A178 and D179. D179 is a Mg(2+) binding site.

The protein belongs to the HpcH/HpaI aldolase family. KDR aldolase subfamily. As to quaternary structure, homohexamer. The cofactor is Mg(2+).

It carries out the reaction 2-dehydro-3-deoxy-L-rhamnonate = (S)-lactaldehyde + pyruvate. Its function is as follows. Catalyzes the reversible retro-aldol cleavage of 2-keto-3-deoxy-L-rhamnonate (KDR) to pyruvate and lactaldehyde. This Escherichia coli O6:K15:H31 (strain 536 / UPEC) protein is 2-keto-3-deoxy-L-rhamnonate aldolase.